The chain runs to 181 residues: Transcription antitermination protein NusB (181 aa).

Residues 1 to 36 (MTEDNNKAAGAKPRPARQVRTGLTSTGARKASAKSN) form a disordered region.

It belongs to the NusB family.

In terms of biological role, involved in transcription antitermination. Required for transcription of ribosomal RNA (rRNA) genes. Binds specifically to the boxA antiterminator sequence of the ribosomal RNA (rrn) operons. The polypeptide is Transcription antitermination protein NusB (Variovorax paradoxus (strain S110)).